The chain runs to 123 residues: MPTIKQLIRNTRQPIKNVTKSPALRGCPQRRGTCTRVYTITPKKPNSALRKVARVRLTSGFEITAYIPGIGHNLQEHSVVLVRGGRVKDLPGVRYHIVRGTLDAVGVKDRQQGRSKYGVKKPK.

It belongs to the universal ribosomal protein uS12 family. As to quaternary structure, part of the 30S ribosomal subunit.

The protein localises to the plastid. Its subcellular location is the chloroplast. With S4 and S5 plays an important role in translational accuracy. Located at the interface of the 30S and 50S subunits. This is Small ribosomal subunit protein uS12cz/uS12cy (rps12-A) from Drimys granadensis.